A 316-amino-acid polypeptide reads, in one-letter code: Aspartate carbamoyltransferase catalytic subunit (316 aa).

Residues Arg-66 and Thr-67 each contribute to the carbamoyl phosphate site. Lys-94 serves as a coordination point for L-aspartate. Residues Arg-116, His-146, and Gln-149 each coordinate carbamoyl phosphate. Arg-179 and Arg-234 together coordinate L-aspartate. The carbamoyl phosphate site is built by Gly-275 and Pro-276.

The protein belongs to the aspartate/ornithine carbamoyltransferase superfamily. ATCase family. In terms of assembly, heterododecamer (2C3:3R2) of six catalytic PyrB chains organized as two trimers (C3), and six regulatory PyrI chains organized as three dimers (R2).

It carries out the reaction carbamoyl phosphate + L-aspartate = N-carbamoyl-L-aspartate + phosphate + H(+). Its pathway is pyrimidine metabolism; UMP biosynthesis via de novo pathway; (S)-dihydroorotate from bicarbonate: step 2/3. Catalyzes the condensation of carbamoyl phosphate and aspartate to form carbamoyl aspartate and inorganic phosphate, the committed step in the de novo pyrimidine nucleotide biosynthesis pathway. The protein is Aspartate carbamoyltransferase catalytic subunit of Nitrosomonas eutropha (strain DSM 101675 / C91 / Nm57).